The primary structure comprises 435 residues: NADH-quinone oxidoreductase subunit D (435 aa).

It belongs to the complex I 49 kDa subunit family. In terms of assembly, NDH-1 is composed of 14 different subunits. Subunits NuoB, C, D, E, F, and G constitute the peripheral sector of the complex.

Its subcellular location is the cell inner membrane. It carries out the reaction a quinone + NADH + 5 H(+)(in) = a quinol + NAD(+) + 4 H(+)(out). Functionally, NDH-1 shuttles electrons from NADH, via FMN and iron-sulfur (Fe-S) centers, to quinones in the respiratory chain. The immediate electron acceptor for the enzyme in this species is believed to be ubiquinone. Couples the redox reaction to proton translocation (for every two electrons transferred, four hydrogen ions are translocated across the cytoplasmic membrane), and thus conserves the redox energy in a proton gradient. This Xanthomonas oryzae pv. oryzae (strain MAFF 311018) protein is NADH-quinone oxidoreductase subunit D.